Reading from the N-terminus, the 298-residue chain is Cholesterol 25-hydroxylase (298 aa).

Asparagine 5 carries N-linked (GlcNAc...) asparagine glycosylation. The next 3 membrane-spanning stretches (helical) occupy residues 38-58 (IFPVTFSIITYVGFCLPFVVL), 88-108 (LGLTLYQHLVFVFPVTLLHWV), and 124-144 (LLSHVLICLLLFDTEIFAWHL). In terms of domain architecture, Fatty acid hydroxylase spans 128–263 (VLICLLLFDT…FTHWDKMLGT (136 aa)). The short motif at 142 to 146 (WHLLH) is the Histidine box-1 element. A Histidine box-2 motif is present at residues 157–161 (HKVHH). Residue asparagine 163 is glycosylated (N-linked (GlcNAc...) asparagine). The Histidine box-3 motif lies at 238–244 (HHDMHHS).

It belongs to the sterol desaturase family. Fe cation is required as a cofactor. N-glycosylated. Widely expressed at low level and at higher level in the lung. Weakly expressed in the heart, lung and kidney.

Its subcellular location is the endoplasmic reticulum membrane. The catalysed reaction is cholesterol + AH2 + O2 = 25-hydroxycholesterol + A + H2O. The enzyme catalyses cholesterol + NADPH + O2 + H(+) = 25-hydroxycholesterol + NADP(+) + H2O. Catalyzes the formation of 25-hydroxycholesterol from cholesterol, leading to repress cholesterol biosynthetic enzymes. Plays a key role in cell positioning and movement in lymphoid tissues: 25-hydroxycholesterol is an intermediate in biosynthesis of 7-alpha,25-dihydroxycholesterol (7-alpha,25-OHC), an oxysterol that acts as a ligand for the G protein-coupled receptor GPR183/EBI2, a chemotactic receptor for a number of lymphoid cells. May play an important role in regulating lipid metabolism by synthesizing a corepressor that blocks sterol regulatory element binding protein (SREBP) processing. In testis, production of 25-hydroxycholesterol by macrophages may play a role in Leydig cell differentiation. Required to restrain inflammation in macrophages: production of 25-hydroxycholesterol protects macrophages from cholesterol overload, thereby preventing mitochondrial DNA release and subsequent activation of the AIM2 inflammasome. Interferon-stimulated gene which has broad antiviral activities against a wide range of enveloped viruses. In Mus musculus (Mouse), this protein is Cholesterol 25-hydroxylase.